A 235-amino-acid chain; its full sequence is Exosome complex component RRP46 (235 aa).

Residues 1 to 13 (MEEETHTDAKIRA) are compositionally biased toward basic and acidic residues. The disordered stretch occupies residues 1-24 (MEEETHTDAKIRAENGTGSSPRGP). Serine 20 carries the phosphoserine modification.

It belongs to the RNase PH family. In terms of assembly, homodimer. Component of the RNA exosome core complex (Exo-9), composed of EXOSC1, EXOSC2, EXOSC3, EXOSC4, EXOSC5, EXOSC6, EXOSC7, EXOSC8 and EXOSC9; within the complex interacts with EXOSC3, EXOSC8, and EXOSC9. The catalytically inactive RNA exosome core complex (Exo-9) associates with the catalytic subunit EXOSC10/RRP6. Exo-9 may associate with DIS3 to form the nucleolar exosome complex, or DIS3L to form the cytoplasmic exosome complex. Exo-9 is formed by a hexameric base ring consisting of the heterodimers EXOSC4-EXOSC9, EXOSC5-EXOSC8 and EXOSC6-EXOSC7, and a cap ring consisting of EXOSC1, EXOSC2 and EXOSC3. The RNA exosome complex associates with cofactors C1D/RRP47, MPHOSPH6/MPP6 and MTREX/MTR4. Interacts with GTPBP1. Interacts with ZC3HAV1. Interacts with DDX17 only in the presence of ZC3HAV1 in an RNA-independent manner. In terms of tissue distribution, highly expressed in a variety of hematopoietic and epithelial tumor cell lines, but not in normal hematopoietic tissues or other normal tissue, with the exception of testis.

The protein resides in the nucleus. The protein localises to the nucleolus. It localises to the cytoplasm. In terms of biological role, non-catalytic component of the RNA exosome complex which has 3'-&gt;5' exoribonuclease activity and participates in a multitude of cellular RNA processing and degradation events. In the nucleus, the RNA exosome complex is involved in proper maturation of stable RNA species such as rRNA, snRNA and snoRNA, in the elimination of RNA processing by-products and non-coding 'pervasive' transcripts, such as antisense RNA species and promoter-upstream transcripts (PROMPTs), and of mRNAs with processing defects, thereby limiting or excluding their export to the cytoplasm. The RNA exosome may be involved in Ig class switch recombination (CSR) and/or Ig variable region somatic hypermutation (SHM) by targeting AICDA deamination activity to transcribed dsDNA substrates. In the cytoplasm, the RNA exosome complex is involved in general mRNA turnover and specifically degrades inherently unstable mRNAs containing AU-rich elements (AREs) within their 3' untranslated regions, and in RNA surveillance pathways, preventing translation of aberrant mRNAs. It seems to be involved in degradation of histone mRNA. The catalytic inactive RNA exosome core complex of 9 subunits (Exo-9) is proposed to play a pivotal role in the binding and presentation of RNA for ribonucleolysis, and to serve as a scaffold for the association with catalytic subunits and accessory proteins or complexes. In vitro, EXOSC5 does not bind or digest single-stranded RNA and binds to double-stranded DNA without detectable DNase activity. The polypeptide is Exosome complex component RRP46 (EXOSC5) (Homo sapiens (Human)).